The chain runs to 542 residues: NAD-dependent deacetylase sir2D (542 aa).

Disordered regions lie at residues 1-37 (MNKRSLENNELNEIQNNQNKNNNNKINKEIPSDNTPL) and 136-160 (ETSTSITNTSSTTTTSTSTTTTTTT). The span at 8–25 (NNELNEIQNNQNKNNNNK) shows a compositional bias: low complexity. The stretch at 165–193 (NETILLDILNNNKDEVDDEIQRIGNNVGN) forms a coiled coil. Residues 283-542 (ATLDLSTFEK…VQDLLNKVKW (260 aa)) enclose the Deacetylase sirtuin-type domain. H411 serves as the catalytic Proton acceptor. Positions 419, 422, 443, and 446 each coordinate Zn(2+).

It belongs to the sirtuin family. Zn(2+) is required as a cofactor.

The catalysed reaction is N(6)-acetyl-L-lysyl-[protein] + NAD(+) + H2O = 2''-O-acetyl-ADP-D-ribose + nicotinamide + L-lysyl-[protein]. Its function is as follows. NAD-dependent deacetylase, which plays an important role in the regulation of transcriptional repression. This Dictyostelium discoideum (Social amoeba) protein is NAD-dependent deacetylase sir2D (sir2D).